The sequence spans 243 residues: UPF0702 transmembrane protein YkjA (243 aa).

3 helical membrane passes run 3-23 (WMVW…YILF), 34-54 (MNNF…EPIL), and 58-78 (LPMS…MSKL).

This sequence belongs to the UPF0702 family.

The protein localises to the cell membrane. In Bacillus subtilis (strain 168), this protein is UPF0702 transmembrane protein YkjA (ykjA).